Here is a 133-residue protein sequence, read N- to C-terminus: Helix-loop-helix protein 1 (133 aa).

A disordered region spans residues 1–78 (MMLNSDTMEL…RRRATAKYRT (78 aa)). Residues 25 to 39 (DCGGGPGPDGAGSGD) are compositionally biased toward gly residues. Positions 52–65 (ESGRKDLQHLSREE) are enriched in basic and acidic residues. Positions 66-78 (RRRRRRATAKYRT) are enriched in basic residues. In terms of domain architecture, bHLH spans 75 to 127 (KYRTAHATRERIRVEAFNLAFAELRKLLPTLPPDKKLSKIEILRLAICYISYL).

In terms of assembly, efficient DNA binding requires dimerization with another bHLH protein.

The protein resides in the nucleus. Functionally, may serve as DNA-binding protein and may be involved in the control of cell-type determination, possibly within the developing nervous system. The protein is Helix-loop-helix protein 1 (Nhlh1) of Mus musculus (Mouse).